Consider the following 90-residue polypeptide: MSVKIRMHRAGAKRKPFYRIVVADSRMPRDGRFIEQVGYYNPVSQPKELKLDEDKIFEWLQKGAQPSDTVRSLLSGAGLMAKLHDAKYNK.

Belongs to the bacterial ribosomal protein bS16 family.

This is Small ribosomal subunit protein bS16 from Lactobacillus acidophilus (strain ATCC 700396 / NCK56 / N2 / NCFM).